The primary structure comprises 130 residues: Protein ApaG (130 aa).

Residues 3–127 (RALTKDIEVV…FSLDSPGLLR (125 aa)) form the ApaG domain.

In Rhizobium leguminosarum bv. trifolii (strain WSM2304), this protein is Protein ApaG.